We begin with the raw amino-acid sequence, 546 residues long: Chaperonin GroEL (546 aa).

Residues threonine 30–proline 33, lysine 51, aspartate 87–threonine 91, glycine 415, asparagine 479–alanine 481, and aspartate 495 contribute to the ATP site. The segment at lysine 526 to phenylalanine 546 is disordered. Residues alanine 534 to phenylalanine 546 show a composition bias toward gly residues.

The protein belongs to the chaperonin (HSP60) family. In terms of assembly, forms a cylinder of 14 subunits composed of two heptameric rings stacked back-to-back. Interacts with the co-chaperonin GroES.

The protein localises to the cytoplasm. It carries out the reaction ATP + H2O + a folded polypeptide = ADP + phosphate + an unfolded polypeptide.. Its function is as follows. Together with its co-chaperonin GroES, plays an essential role in assisting protein folding. The GroEL-GroES system forms a nano-cage that allows encapsulation of the non-native substrate proteins and provides a physical environment optimized to promote and accelerate protein folding. In Xanthomonas euvesicatoria pv. vesicatoria (strain 85-10) (Xanthomonas campestris pv. vesicatoria), this protein is Chaperonin GroEL.